A 152-amino-acid polypeptide reads, in one-letter code: Cell division protein SepF (152 aa).

Belongs to the SepF family. Homodimer. Interacts with FtsZ.

Its subcellular location is the cytoplasm. Cell division protein that is part of the divisome complex and is recruited early to the Z-ring. Probably stimulates Z-ring formation, perhaps through the cross-linking of FtsZ protofilaments. Its function overlaps with FtsA. In Listeria monocytogenes serotype 4b (strain CLIP80459), this protein is Cell division protein SepF.